The following is a 275-amino-acid chain: Dermonecrotic toxin SpeSicTox-betaIIA2v (275 aa).

His-5 is a catalytic residue. Positions 25 and 27 each coordinate Mg(2+). The active-site Nucleophile is the His-41. 2 disulfide bridges follow: Cys-45/Cys-51 and Cys-47/Cys-190. A Mg(2+)-binding site is contributed by Asp-85.

This sequence belongs to the arthropod phospholipase D family. Class II subfamily. Requires Mg(2+) as cofactor. In terms of tissue distribution, expressed by the venom gland.

It is found in the secreted. It carries out the reaction an N-(acyl)-sphingosylphosphocholine = an N-(acyl)-sphingosyl-1,3-cyclic phosphate + choline. The enzyme catalyses an N-(acyl)-sphingosylphosphoethanolamine = an N-(acyl)-sphingosyl-1,3-cyclic phosphate + ethanolamine. The catalysed reaction is a 1-acyl-sn-glycero-3-phosphocholine = a 1-acyl-sn-glycero-2,3-cyclic phosphate + choline. It catalyses the reaction a 1-acyl-sn-glycero-3-phosphoethanolamine = a 1-acyl-sn-glycero-2,3-cyclic phosphate + ethanolamine. Functionally, dermonecrotic toxins cleave the phosphodiester linkage between the phosphate and headgroup of certain phospholipids (sphingolipid and lysolipid substrates), forming an alcohol (often choline) and a cyclic phosphate. This toxin acts on sphingomyelin (SM). It may also act on ceramide phosphoethanolamine (CPE), lysophosphatidylcholine (LPC) and lysophosphatidylethanolamine (LPE), but not on lysophosphatidylserine (LPS), and lysophosphatidylglycerol (LPG). It acts by transphosphatidylation, releasing exclusively cyclic phosphate products as second products. Induces dermonecrosis, hemolysis, increased vascular permeability, edema, inflammatory response, and platelet aggregation. The chain is Dermonecrotic toxin SpeSicTox-betaIIA2v from Sicarius peruensis (Six-eyed sand spider).